Consider the following 483-residue polypeptide: WAS/WASL-interacting protein family member 3 (483 aa).

The segment covering Met1 to Pro29 has biased composition (pro residues). The segment at Met1–His414 is disordered. Short sequence motifs (profilin-binding motif) lie at residues Val3–Pro8, Leu11–Pro16, and Ala20–Pro25. A WH2 domain is found at Gly45–Val62. At Arg46 the chain carries Asymmetric dimethylarginine. Positions Arg58–Lys61 match the RLRK motif. Composition is skewed to polar residues over residues Thr63–Gly78 and Ala87–Pro96. Phosphoserine is present on Ser149. Pro residues predominate over residues Pro166 to Ser192. Ser202 bears the Phosphoserine mark. Pro residues-rich tracts occupy residues Val215–Pro239 and His256–Gly271. Residues Ala277 to Glu288 show a composition bias toward low complexity. Pro residues predominate over residues Pro289–Pro298. Composition is skewed to low complexity over residues Tyr299 to Leu308 and Pro331 to Leu345. Ser383 is subject to Phosphoserine. Residues Gln393–Pro404 are compositionally biased toward low complexity. A WASP-binding motif motif is present at residues Thr424–Ile448. Positions Glu461–Arg483 are disordered. Polar residues predominate over residues Arg473 to Arg483.

The protein belongs to the verprolin family. Interacts with WASL, and monomeric and filamentous actin.

The protein resides in the cytoplasm. In terms of biological role, may be a regulator of cytoskeletal organization. May have a role in spermatogenesis. The sequence is that of WAS/WASL-interacting protein family member 3 (WIPF3) from Homo sapiens (Human).